The following is a 556-amino-acid chain: 2-isopropylmalate synthase (556 aa).

In terms of domain architecture, Pyruvate carboxyltransferase spans 33-307; that stretch reads PIWCSSDLRD…NPGLDFSDID (275 aa). Residues D42, H246, H248, and N282 each coordinate Mg(2+). The interval 439–556 is regulatory domain; that stretch reads ANVPYALISH…SLSQTQAKAA (118 aa).

Belongs to the alpha-IPM synthase/homocitrate synthase family. LeuA type 2 subfamily. In terms of assembly, homodimer. The cofactor is Mg(2+).

It localises to the cytoplasm. The enzyme catalyses 3-methyl-2-oxobutanoate + acetyl-CoA + H2O = (2S)-2-isopropylmalate + CoA + H(+). Its pathway is amino-acid biosynthesis; L-leucine biosynthesis; L-leucine from 3-methyl-2-oxobutanoate: step 1/4. Its function is as follows. Catalyzes the condensation of the acetyl group of acetyl-CoA with 3-methyl-2-oxobutanoate (2-ketoisovalerate) to form 3-carboxy-3-hydroxy-4-methylpentanoate (2-isopropylmalate). This is 2-isopropylmalate synthase from Pseudomonas syringae pv. syringae (strain B728a).